A 365-amino-acid polypeptide reads, in one-letter code: UDP-N-acetylglucosamine--N-acetylmuramyl-(pentapeptide) pyrophosphoryl-undecaprenol N-acetylglucosamine transferase (365 aa).

UDP-N-acetyl-alpha-D-glucosamine is bound by residues 17–19, Asn-129, Arg-167, Ser-194, Ile-250, 269–274, and Gln-295; these read TGG and ALTVSE.

The protein belongs to the glycosyltransferase 28 family. MurG subfamily.

The protein resides in the cell inner membrane. It catalyses the reaction di-trans,octa-cis-undecaprenyl diphospho-N-acetyl-alpha-D-muramoyl-L-alanyl-D-glutamyl-meso-2,6-diaminopimeloyl-D-alanyl-D-alanine + UDP-N-acetyl-alpha-D-glucosamine = di-trans,octa-cis-undecaprenyl diphospho-[N-acetyl-alpha-D-glucosaminyl-(1-&gt;4)]-N-acetyl-alpha-D-muramoyl-L-alanyl-D-glutamyl-meso-2,6-diaminopimeloyl-D-alanyl-D-alanine + UDP + H(+). It participates in cell wall biogenesis; peptidoglycan biosynthesis. Functionally, cell wall formation. Catalyzes the transfer of a GlcNAc subunit on undecaprenyl-pyrophosphoryl-MurNAc-pentapeptide (lipid intermediate I) to form undecaprenyl-pyrophosphoryl-MurNAc-(pentapeptide)GlcNAc (lipid intermediate II). This is UDP-N-acetylglucosamine--N-acetylmuramyl-(pentapeptide) pyrophosphoryl-undecaprenol N-acetylglucosamine transferase from Shewanella halifaxensis (strain HAW-EB4).